The primary structure comprises 288 residues: uncharacterized protein (288 aa).

Basic and acidic residues predominate over residues 1–12; it reads MTEGRCAQHPDG. The segment at 1-20 is disordered; it reads MTEGRCAQHPDGLDVQDVCD.

It belongs to the class IV-like SAM-binding methyltransferase superfamily. RNA methyltransferase TrmH family.

This is an uncharacterized protein from Mycobacterium bovis (strain ATCC BAA-935 / AF2122/97).